A 448-amino-acid chain; its full sequence is Allantoinase (448 aa).

Residues H60, H62, K147, H183, H239, and D312 each contribute to the Zn(2+) site. Residue K147 is modified to N6-carboxylysine.

This sequence belongs to the metallo-dependent hydrolases superfamily. Allantoinase family. Homotetramer. Zn(2+) is required as a cofactor. In terms of processing, carboxylation allows a single lysine to coordinate two zinc ions.

The catalysed reaction is (S)-allantoin + H2O = allantoate + H(+). It functions in the pathway nitrogen metabolism; (S)-allantoin degradation; allantoate from (S)-allantoin: step 1/1. Catalyzes the conversion of allantoin (5-ureidohydantoin) to allantoic acid by hydrolytic cleavage of the five-member hydantoin ring. This chain is Allantoinase, found in Deinococcus radiodurans (strain ATCC 13939 / DSM 20539 / JCM 16871 / CCUG 27074 / LMG 4051 / NBRC 15346 / NCIMB 9279 / VKM B-1422 / R1).